The primary structure comprises 264 residues: Thymidylate synthase (264 aa).

Arg21 contacts dUMP. A (6R)-5,10-methylene-5,6,7,8-tetrahydrofolate-binding site is contributed by His51. Position 126–127 (126–127 (RR)) interacts with dUMP. Catalysis depends on Cys146, which acts as the Nucleophile. Residues 166–169 (RSCD), Asn177, and 207–209 (HLY) contribute to the dUMP site. Asp169 is a binding site for (6R)-5,10-methylene-5,6,7,8-tetrahydrofolate. Ala263 is a (6R)-5,10-methylene-5,6,7,8-tetrahydrofolate binding site.

It belongs to the thymidylate synthase family. Bacterial-type ThyA subfamily. In terms of assembly, homodimer.

The protein localises to the cytoplasm. It carries out the reaction dUMP + (6R)-5,10-methylene-5,6,7,8-tetrahydrofolate = 7,8-dihydrofolate + dTMP. Its pathway is pyrimidine metabolism; dTTP biosynthesis. Functionally, catalyzes the reductive methylation of 2'-deoxyuridine-5'-monophosphate (dUMP) to 2'-deoxythymidine-5'-monophosphate (dTMP) while utilizing 5,10-methylenetetrahydrofolate (mTHF) as the methyl donor and reductant in the reaction, yielding dihydrofolate (DHF) as a by-product. This enzymatic reaction provides an intracellular de novo source of dTMP, an essential precursor for DNA biosynthesis. This is Thymidylate synthase from Citrobacter koseri (strain ATCC BAA-895 / CDC 4225-83 / SGSC4696).